The chain runs to 209 residues: Thiamine-phosphate synthase (209 aa).

Residues 36–40 and Asn-68 contribute to the 4-amino-2-methyl-5-(diphosphooxymethyl)pyrimidine site; that span reads QYRDK. The Mg(2+) site is built by Asp-69 and Asp-87. Thr-106 contacts 4-amino-2-methyl-5-(diphosphooxymethyl)pyrimidine. Position 133–135 (133–135) interacts with 2-[(2R,5Z)-2-carboxy-4-methylthiazol-5(2H)-ylidene]ethyl phosphate; it reads SST. Position 136 (Lys-136) interacts with 4-amino-2-methyl-5-(diphosphooxymethyl)pyrimidine. Residue Gly-163 participates in 2-[(2R,5Z)-2-carboxy-4-methylthiazol-5(2H)-ylidene]ethyl phosphate binding.

Belongs to the thiamine-phosphate synthase family. Mg(2+) serves as cofactor.

The catalysed reaction is 2-[(2R,5Z)-2-carboxy-4-methylthiazol-5(2H)-ylidene]ethyl phosphate + 4-amino-2-methyl-5-(diphosphooxymethyl)pyrimidine + 2 H(+) = thiamine phosphate + CO2 + diphosphate. The enzyme catalyses 2-(2-carboxy-4-methylthiazol-5-yl)ethyl phosphate + 4-amino-2-methyl-5-(diphosphooxymethyl)pyrimidine + 2 H(+) = thiamine phosphate + CO2 + diphosphate. It catalyses the reaction 4-methyl-5-(2-phosphooxyethyl)-thiazole + 4-amino-2-methyl-5-(diphosphooxymethyl)pyrimidine + H(+) = thiamine phosphate + diphosphate. The protein operates within cofactor biosynthesis; thiamine diphosphate biosynthesis; thiamine phosphate from 4-amino-2-methyl-5-diphosphomethylpyrimidine and 4-methyl-5-(2-phosphoethyl)-thiazole: step 1/1. Its function is as follows. Condenses 4-methyl-5-(beta-hydroxyethyl)thiazole monophosphate (THZ-P) and 2-methyl-4-amino-5-hydroxymethyl pyrimidine pyrophosphate (HMP-PP) to form thiamine monophosphate (TMP). This chain is Thiamine-phosphate synthase, found in Azotobacter vinelandii (strain DJ / ATCC BAA-1303).